The primary structure comprises 564 residues: Probable lysosomal cobalamin transporter (564 aa).

9 helical membrane-spanning segments follow: residues 8–28 (LIWS…STFI), 41–61 (VTLI…LLPV), 94–114 (TIVY…GIPF), 144–164 (YTLF…FIPT), 188–208 (ALTF…IIYT), 312–332 (LLAG…LCVT), 375–395 (VIFT…IAAF), 418–438 (LLLT…VAVI), and 506–526 (FFGA…LLVL).

The protein belongs to the LIMR family. LMBRD1 subfamily.

The protein localises to the lysosome membrane. Its function is as follows. Probable lysosomal cobalamin transporter. Required to export cobalamin from lysosomes allowing its conversion to cofactors. The sequence is that of Probable lysosomal cobalamin transporter from Aspergillus clavatus (strain ATCC 1007 / CBS 513.65 / DSM 816 / NCTC 3887 / NRRL 1 / QM 1276 / 107).